The sequence spans 448 residues: Glutamyl-tRNA(Gln) amidotransferase subunit D (448 aa).

The region spanning 92–423 (SEVKIISTGG…DKIRSLMLTN (332 aa)) is the Asparaginase/glutaminase domain. Active-site residues include T102, T178, D179, and K257.

Belongs to the asparaginase 1 family. GatD subfamily. Heterodimer of GatD and GatE.

The enzyme catalyses L-glutamyl-tRNA(Gln) + L-glutamine + ATP + H2O = L-glutaminyl-tRNA(Gln) + L-glutamate + ADP + phosphate + H(+). Allows the formation of correctly charged Gln-tRNA(Gln) through the transamidation of misacylated Glu-tRNA(Gln) in organisms which lack glutaminyl-tRNA synthetase. The reaction takes place in the presence of glutamine and ATP through an activated gamma-phospho-Glu-tRNA(Gln). The GatDE system is specific for glutamate and does not act on aspartate. This chain is Glutamyl-tRNA(Gln) amidotransferase subunit D, found in Sulfurisphaera tokodaii (strain DSM 16993 / JCM 10545 / NBRC 100140 / 7) (Sulfolobus tokodaii).